Consider the following 496-residue polypeptide: Autophagy-related protein 21 (496 aa).

A disordered region spans residues 41 to 86 (SKKKTSNNNGSASNSESRNNEESILITNGSRDRTDAEEEEDNEDNA). A compositionally biased stretch (low complexity) spans 46 to 57 (SNNNGSASNSES). The segment covering 75–84 (DAEEEEDNED) has biased composition (acidic residues). Threonine 213 is modified (phosphothreonine). Serine 237 is subject to Phosphoserine. 3 WD repeats span residues 294–334 (VHKG…DYMS), 346–385 (TRLC…NSLP), and 448–488 (VNES…GECV). The L/FRRG motif motif lies at 342–346 (FRRGT).

The protein belongs to the WD repeat PROPPIN family.

It is found in the cytoplasm. The protein localises to the vacuole. Functionally, required for cytoplasm to vacuole transport (Cvt) vesicles formation and mitophagy. Involved in binding of phosphatidylethanolamine to ATG8 and in recruitment of ATG8 and ATG5 to the pre-autophagosomal structure. Protects ATG8 from ARG4-mediated cleavage. Essential for maturation of proaminopeptidase I. The chain is Autophagy-related protein 21 (ATG21) from Saccharomyces cerevisiae (strain ATCC 204508 / S288c) (Baker's yeast).